Consider the following 436-residue polypeptide: p-aminobenzoyl-glutamate hydrolase subunit A (436 aa).

It belongs to the peptidase M20 family. In terms of assembly, forms a heterodimer with AbgB. Mn(2+) serves as cofactor.

Functionally, component of the p-aminobenzoyl-glutamate hydrolase multicomponent enzyme system which catalyzes the cleavage of p-aminobenzoyl-glutamate (PABA-GLU) to form p-aminobenzoate (PABA) and glutamate. AbgAB does not degrade dipeptides and the physiological role of abgABT should be clarified. The protein is p-aminobenzoyl-glutamate hydrolase subunit A (abgA) of Escherichia coli (strain K12).